We begin with the raw amino-acid sequence, 344 residues long: MIKVGIVGGTGYTGVELLRLLAQHPQARVEVITSRSEAGVKVADMYPNLRGHYDDLQFSVPDAQRLGACDVVFFATPHGVAHALAGELLDAGTRVIDLSADFRLADAEEWARWYGQPHGAPALLDEAVYGLPEVNREKIRQARLIAVPGCYPTATQLGLIPLLEAGLADASRLIADCKSGVSGAGRGAKVGSLFCEAGESMMAYAVKGHRHLPEISQGLRRASGGDVGLTFVPHLTPMIRGIHATLYAHVADRSVDLQALFEKRYADEPFVDVMPAGSHPETRSVRGANVCRIAVHRPQGGDLVVVLSVIDNLVKGASGQALQNMNILFGLDERLGLSHAALLP.

Residue cysteine 150 is part of the active site.

This sequence belongs to the NAGSA dehydrogenase family. Type 1 subfamily.

The protein localises to the cytoplasm. The enzyme catalyses N-acetyl-L-glutamate 5-semialdehyde + phosphate + NADP(+) = N-acetyl-L-glutamyl 5-phosphate + NADPH + H(+). The protein operates within amino-acid biosynthesis; L-arginine biosynthesis; N(2)-acetyl-L-ornithine from L-glutamate: step 3/4. Its function is as follows. Catalyzes the NADPH-dependent reduction of N-acetyl-5-glutamyl phosphate to yield N-acetyl-L-glutamate 5-semialdehyde. The protein is N-acetyl-gamma-glutamyl-phosphate reductase of Pseudomonas aeruginosa (strain ATCC 15692 / DSM 22644 / CIP 104116 / JCM 14847 / LMG 12228 / 1C / PRS 101 / PAO1).